We begin with the raw amino-acid sequence, 169 residues long: Ribosome maturation factor RimM (169 aa).

The PRC barrel domain occupies 97-169 (EDEVYFKDLI…KIVVDWEYDY (73 aa)).

It belongs to the RimM family. In terms of assembly, binds ribosomal protein uS19.

It is found in the cytoplasm. Functionally, an accessory protein needed during the final step in the assembly of 30S ribosomal subunit, possibly for assembly of the head region. Essential for efficient processing of 16S rRNA. May be needed both before and after RbfA during the maturation of 16S rRNA. It has affinity for free ribosomal 30S subunits but not for 70S ribosomes. The protein is Ribosome maturation factor RimM of Francisella tularensis subsp. tularensis (strain WY96-3418).